The sequence spans 299 residues: MKKNILNLALVGALSTSFLMAKPAHNANNATHNTKKTTDSSAGVLATVDGRPITKSDFDMIKQRNPNFDFDKLKEKEKEALIDQAIRTALVENEAKTEKLDSTPEFKAMMEAVKKQALVEFWAKKQAEEVKKVQIPEKEMQDFYNANKDQLFVKQEAHARHILVKTEDEAKRIISEIDKQPKAKKEAKFIELANRDTIDPNSKNAQNGGDLGKFQKNQMAPDFSKAAFALTPGDYTKTPVKTEFGYHIIYLISKDSPVTYTYEQAKPTIKGMLQEKLFQERMNQRIEELRKHAKIVINK.

Residues 1–21 (MKKNILNLALVGALSTSFLMA) form the signal peptide. One can recognise a PpiC domain in the interval 154–253 (KQEAHARHIL…FGYHIIYLIS (100 aa)).

The enzyme catalyses [protein]-peptidylproline (omega=180) = [protein]-peptidylproline (omega=0). In Helicobacter pylori (strain ATCC 700392 / 26695) (Campylobacter pylori), this protein is Putative peptidyl-prolyl cis-trans isomerase HP_0175.